Consider the following 443-residue polypeptide: D(2) dopamine receptor (443 aa).

Residues 1–37 (MDPLNLSWYDDDLERQNWSRPFNGSDGKADRPHYNYY) are Extracellular-facing. 3 N-linked (GlcNAc...) asparagine glycosylation sites follow: asparagine 5, asparagine 17, and asparagine 23. A helical membrane pass occupies residues 38–60 (ATLLTLLIAVIVFGNVLVCMAVS). Residues 61–70 (REKALQTTTN) are Cytoplasmic-facing. A helical membrane pass occupies residues 71 to 93 (YLIVSLAVADLLVATLVMPWVVY). Residues 94–108 (LEVVGEWKFSKIHCD) are Extracellular-facing. A disulfide bridge links cysteine 107 with cysteine 182. The chain crosses the membrane as a helical span at residues 109 to 130 (IFVTLDVMMCTASILNLCAISI). At 131-151 (DRYTAVAMPMLYNTRYSSKRR) the chain is on the cytoplasmic side. The helical transmembrane segment at 152 to 172 (VTVMIAIVWVLSFTISCPLLF) threads the bilayer. The Extracellular portion of the chain corresponds to 173–188 (GLNNADQNECIIANPA). Residues 189-213 (FVVYSSIVSFYVPFIVTLLVYIKIY) form a helical membrane-spanning segment. The segment at 211-373 (KIYIVLRRRR…SQQKEKKATQ (163 aa)) is interaction with PPP1R9B. Residues 214–373 (IVLRRRRKRV…SQQKEKKATQ (160 aa)) lie on the Cytoplasmic side of the membrane. A disordered region spans residues 281 to 332 (MEMLSSTSPPERTRYSPIPPSHHQLTLPDPSHHGLHSTPDSPAKPEKNGHAK). The chain crosses the membrane as a helical span at residues 374 to 395 (MLAIVLGVFIICWLPFFITHIL). Over 396-409 (NIHCDCNIPPVLYS) the chain is Extracellular. A disulfide bridge connects residues cysteine 399 and cysteine 401. A helical transmembrane segment spans residues 410 to 431 (AFTWLGYVNSAVNPIIYTTFNI). Over 432-443 (EFRKAFLKILHC) the chain is Cytoplasmic. Cysteine 443 is lipidated: S-palmitoyl cysteine.

This sequence belongs to the G-protein coupled receptor 1 family. Forms homo- and heterooligomers with DRD4. The interaction with DRD4 may modulate agonist-induced downstream signaling. Interacts with CADPS and CADPS2. Interacts with GPRASP1, PPP1R9B and CLIC6. Interacts with ARRB2. Interacts with HTR2A. Interacts with DRD1. Interacts with KCNA2. Post-translationally, palmitoylated. Palmitoylation which is required for proper localization to the plasma membrane and stability of the receptor could be carried on by ZDHHC4, ZDHHC3 and ZDHHC8.

The protein localises to the cell membrane. Its subcellular location is the golgi apparatus membrane. Functionally, dopamine receptor whose activity is mediated by G proteins which inhibit adenylyl cyclase. Positively regulates postnatal regression of retinal hyaloid vessels via suppression of VEGFR2/KDR activity, downstream of OPN5. This chain is D(2) dopamine receptor (DRD2), found in Chlorocebus aethiops (Green monkey).